The chain runs to 107 residues: Small integral membrane protein 19 (107 aa).

A helical transmembrane segment spans residues 25–43; sequence ATNVYLIVILVSFGLFMYA.

This sequence belongs to the SMIM19 family.

The protein localises to the membrane. In Homo sapiens (Human), this protein is Small integral membrane protein 19 (SMIM19).